The primary structure comprises 708 residues: Leukotoxin translocation ATP-binding protein LktB (708 aa).

A Peptidase C39 domain is found at 1–126 (MEANHQRNDL…ACYQGQLILV (126 aa)). An ABC transmembrane type-1 domain is found at 155 to 437 (FLETLIVSIF…LAQLWQDFQQ (283 aa)). 5 consecutive transmembrane segments (helical) span residues 159–179 (LIVSIFLQIFALITPLFFQVV), 192–212 (LNIITVALAIVIIFEIVLSGL), 270–290 (ALTSVLDLLFSFIFFAVMWYY), 296–316 (LVILGSLPCYILWSIFISPIL), and 389–409 (VMVINLWLGAHLVISGDLSIG). Positions 469 to 704 (ISFKNIRFRY…SNGLYSYLHQ (236 aa)) constitute an ABC transporter domain. ATP is bound at residue 503–510 (GRSGSGKS).

It belongs to the ABC transporter superfamily. Protein-1 exporter (TC 3.A.1.109) family. In terms of assembly, homodimer.

It localises to the cell inner membrane. It catalyses the reaction ATP + H2O + proteinSide 1 = ADP + phosphate + proteinSide 2.. In terms of biological role, part of the ABC transporter complex LktBD involved in leukotoxin export. Transmembrane domains (TMD) form a pore in the inner membrane and the ATP-binding domain (NBD) is responsible for energy generation. The polypeptide is Leukotoxin translocation ATP-binding protein LktB (lktB) (Mannheimia haemolytica (Pasteurella haemolytica)).